The primary structure comprises 533 residues: Cytochrome P450 9e2 (533 aa).

Heme is bound at residue Cys-475.

Belongs to the cytochrome P450 family. Heme is required as a cofactor.

Its subcellular location is the endoplasmic reticulum membrane. The protein localises to the microsome membrane. This chain is Cytochrome P450 9e2 (CYP9E2), found in Blattella germanica (German cockroach).